The primary structure comprises 412 residues: Putative competence-damage inducible protein (412 aa).

It belongs to the CinA family.

The protein is Putative competence-damage inducible protein of Clostridium perfringens (strain ATCC 13124 / DSM 756 / JCM 1290 / NCIMB 6125 / NCTC 8237 / Type A).